We begin with the raw amino-acid sequence, 572 residues long: Receptor-transporting protein 5 (572 aa).

Residues 52–148 (SRLQCGHCPG…AYEGCCEACE (97 aa)) form a 3CxxC-type zinc finger. A helical transmembrane segment spans residues 544–560 (FWIWVSMTVCVFWLMCM).

Its subcellular location is the membrane. The polypeptide is Receptor-transporting protein 5 (RTP5) (Homo sapiens (Human)).